A 550-amino-acid polypeptide reads, in one-letter code: Hydroxylamine reductase (550 aa).

[4Fe-4S] cluster-binding residues include cysteine 5, cysteine 8, cysteine 17, and cysteine 23. Residues histidine 250, glutamate 274, cysteine 319, cysteine 405, cysteine 433, cysteine 458, glutamate 492, and lysine 494 each contribute to the hybrid [4Fe-2O-2S] cluster site. A Cysteine persulfide modification is found at cysteine 405.

It belongs to the HCP family. It depends on [4Fe-4S] cluster as a cofactor. Hybrid [4Fe-2O-2S] cluster is required as a cofactor.

It localises to the cytoplasm. The enzyme catalyses A + NH4(+) + H2O = hydroxylamine + AH2 + H(+). Functionally, catalyzes the reduction of hydroxylamine to form NH(3) and H(2)O. The polypeptide is Hydroxylamine reductase (Geobacter sulfurreducens (strain ATCC 51573 / DSM 12127 / PCA)).